The sequence spans 483 residues: Aspartyl/glutamyl-tRNA(Asn/Gln) amidotransferase subunit B (483 aa).

Belongs to the GatB/GatE family. GatB subfamily. As to quaternary structure, heterotrimer of A, B and C subunits.

The enzyme catalyses L-glutamyl-tRNA(Gln) + L-glutamine + ATP + H2O = L-glutaminyl-tRNA(Gln) + L-glutamate + ADP + phosphate + H(+). It carries out the reaction L-aspartyl-tRNA(Asn) + L-glutamine + ATP + H2O = L-asparaginyl-tRNA(Asn) + L-glutamate + ADP + phosphate + 2 H(+). Its function is as follows. Allows the formation of correctly charged Asn-tRNA(Asn) or Gln-tRNA(Gln) through the transamidation of misacylated Asp-tRNA(Asn) or Glu-tRNA(Gln) in organisms which lack either or both of asparaginyl-tRNA or glutaminyl-tRNA synthetases. The reaction takes place in the presence of glutamine and ATP through an activated phospho-Asp-tRNA(Asn) or phospho-Glu-tRNA(Gln). The protein is Aspartyl/glutamyl-tRNA(Asn/Gln) amidotransferase subunit B of Rickettsia typhi (strain ATCC VR-144 / Wilmington).